A 355-amino-acid chain; its full sequence is Guanine nucleotide-binding protein subunit alpha-14 (355 aa).

Residues 34–355 (RELKLLLLGT…QLNLREFNLV (322 aa)) form the G-alpha domain. The segment at 37–50 (KLLLLGTGESGKST) is G1 motif. Residues 42-49 (GTGESGKS), 176-182 (LRVRVPT), 201-205 (DVGGQ), 270-273 (NKKD), and A327 contribute to the GTP site. S49 is a binding site for Mg(2+). Residues 174-182 (DVLRVRVPT) are G2 motif. R179 bears the ADP-ribosylarginine; by cholera toxin mark. T182 is a Mg(2+) binding site. Residues 197 to 206 (FRMVDVGGQR) are G3 motif. Residues 266 to 273 (ILFLNKKD) form a G4 motif region. A G5 motif region spans residues 325 to 330 (TCATDT).

It belongs to the G-alpha family. G(q) subfamily. As to quaternary structure, g proteins are composed of 3 units; alpha, beta and gamma. The alpha chain contains the guanine nucleotide binding site.

In terms of biological role, guanine nucleotide-binding proteins (G proteins) are involved as modulators or transducers in various transmembrane signaling systems. The chain is Guanine nucleotide-binding protein subunit alpha-14 (GNA14) from Homo sapiens (Human).